A 236-amino-acid polypeptide reads, in one-letter code: Phosphoribosylformylglycinamidine synthase subunit PurQ (236 aa).

Residues 2–234 enclose the Glutamine amidotransferase type-1 domain; the sequence is RFAVVTFPGS…LSVGLEVAHS (233 aa). Cys86 (nucleophile) is an active-site residue. Active-site residues include His203 and Glu205.

In terms of assembly, part of the FGAM synthase complex composed of 1 PurL, 1 PurQ and 2 PurS subunits.

The protein localises to the cytoplasm. The catalysed reaction is N(2)-formyl-N(1)-(5-phospho-beta-D-ribosyl)glycinamide + L-glutamine + ATP + H2O = 2-formamido-N(1)-(5-O-phospho-beta-D-ribosyl)acetamidine + L-glutamate + ADP + phosphate + H(+). It carries out the reaction L-glutamine + H2O = L-glutamate + NH4(+). It participates in purine metabolism; IMP biosynthesis via de novo pathway; 5-amino-1-(5-phospho-D-ribosyl)imidazole from N(2)-formyl-N(1)-(5-phospho-D-ribosyl)glycinamide: step 1/2. Its function is as follows. Part of the phosphoribosylformylglycinamidine synthase complex involved in the purines biosynthetic pathway. Catalyzes the ATP-dependent conversion of formylglycinamide ribonucleotide (FGAR) and glutamine to yield formylglycinamidine ribonucleotide (FGAM) and glutamate. The FGAM synthase complex is composed of three subunits. PurQ produces an ammonia molecule by converting glutamine to glutamate. PurL transfers the ammonia molecule to FGAR to form FGAM in an ATP-dependent manner. PurS interacts with PurQ and PurL and is thought to assist in the transfer of the ammonia molecule from PurQ to PurL. This Thermomicrobium roseum (strain ATCC 27502 / DSM 5159 / P-2) protein is Phosphoribosylformylglycinamidine synthase subunit PurQ.